The primary structure comprises 960 residues: Dynamin-like GTPase OPA1, mitochondrial (960 aa).

Residues 1–87 (MWRAGRAALA…TKYGYQPRRN (87 aa)) constitute a mitochondrion transit peptide. Residues 88–96 (FWPARLAAR) are Mitochondrial matrix-facing. The chain crosses the membrane as a helical span at residues 97–113 (LLKLRYIILGSAVGGGY). Residues 114–770 (TAKKTFDEWK…NAIENMIGPD (657 aa)) are Mitochondrial intermembrane-facing. The stretch at 210–254 (SDKEKIDQLQEELLHTQLKYQRILERLEKENKELRKLVLQKDDKG) forms a coiled coil. Positions 217-222 (QLQEEL) match the LQQQIQ motif motif. Lys-228 is modified (N6-acetyllysine). The short motif at 234–239 (ERLEKE) is the LQQQIQ motif element. The 277-residue stretch at 285 to 561 (QDHLPRVVVV…FWKMVRESVE (277 aa)) folds into the Dynamin-type G domain. Positions 295–302 (GDQSAGKT) are G1 motif. Positions 298, 300, 301, 302, 303, and 317 each coordinate GTP. A Mg(2+)-binding site is contributed by Thr-302. Residues 321–324 (MMTR) form a G2 motif region. 2 residues coordinate Mg(2+): Thr-323 and Asp-398. Residues 398–401 (DLPG) are G3 motif. Positions 467–470 (TKVD) are G4 motif. The GTP site is built by Lys-468, Asp-470, and Thr-503. The G5 motif stretch occupies residues 501 to 504 (VVTG). 2 stalk region regions span residues 589 to 836 (DRNE…IKDT) and 874 to 928 (CNDV…VKLL). A paddle region region spans residues 736 to 856 (SDKQQWDAAI…KTALNHCNLC (121 aa)). The stretch at 771–781 (WKKRWIYWKNR) is an intramembrane region. The Mitochondrial intermembrane segment spans residues 782 to 960 (TQEQCVHNET…AFIEALHQEK (179 aa)). Residues Cys-856 and Cys-874 are joined by a disulfide bond. Residues 895-960 (RQQLTNTEVR…AFIEALHQEK (66 aa)) adopt a coiled-coil conformation.

This sequence belongs to the TRAFAC class dynamin-like GTPase superfamily. Dynamin/Fzo/YdjA family. Oligomeric complex consisting of membrane-bound and soluble forms of OPA1. Interacts with RCC1L; RCC1L acts as a guanine nucleotide exchange factor (GEF) for OPA1 by exchanging bound GDP for free GTP. Interacts with CHCHD3 and IMMT; these interactions occur preferentially with soluble OPA1 forms. Interacts with PRELID1. In terms of processing, cleaved by OMA1 or YME1L downstream of the transmembrane region in response to different signals to generate soluble forms. Cleaved by OMA1 at position S1 following stress conditions, generating the short soluble form (Dynamin-like GTPase OPA1, short form; S-OPA1). AFG3L2 is involved in the regulation of OMA1-dependent processing of OPA1. PARL-dependent proteolytic processing releases an antiapoptotic soluble form not required for mitochondrial fusion. Post-translationally, cleavage at position S2 by YME1L is required to mediate oxidative phosphorylation (OXPHOS)-induced mitochondrial fusion. Cleavage occurs in the sequence motif Leu-Gln-Gln-Gln-Ile-Gln (LQQQIQ). As to expression, expressed in brain as well as retinal ganglion, starbust amacrine and horizontal cells of the retina. Absent from nerve fibers and photoreceptor cells of the retina.

The protein localises to the mitochondrion inner membrane. Its subcellular location is the mitochondrion intermembrane space. The enzyme catalyses GTP + H2O = GDP + phosphate + H(+). Its activity is regulated as follows. Activated by guanine nucleotide exchange factor RCC1L. Functionally, dynamin-related GTPase that is essential for normal mitochondrial morphology by mediating fusion of the mitochondrial inner membranes, regulating cristae morphology and maintaining respiratory chain function. Exists in two forms: the transmembrane, long form (Dynamin-like GTPase OPA1, long form; L-OPA1), which is tethered to the inner mitochondrial membrane, and the short soluble form (Dynamin-like GTPase OPA1, short form; S-OPA1), which results from proteolytic cleavage and localizes in the intermembrane space. Both forms (L-OPA1 and S-OPA1) cooperate to catalyze the fusion of the mitochondrial inner membrane. The equilibrium between L-OPA1 and S-OPA1 is essential: excess levels of S-OPA1, produced by cleavage by OMA1 following loss of mitochondrial membrane potential, lead to an impaired equilibrium between L-OPA1 and S-OPA1, inhibiting mitochondrial fusion. The balance between L-OPA1 and S-OPA1 also influences cristae shape and morphology. Involved in remodeling cristae and the release of cytochrome c during apoptosis. Proteolytic processing by PARL in response to intrinsic apoptotic signals may lead to disassembly of OPA1 oligomers and release of the caspase activator cytochrome C (CYCS) into the mitochondrial intermembrane space. Acts as a regulator of T-helper Th17 cells, which are characterized by cells with fused mitochondria with tight cristae, by mediating mitochondrial membrane remodeling: OPA1 is required for interleukin-17 (IL-17) production. Its role in mitochondrial morphology is required for mitochondrial genome maintenance. In terms of biological role, constitutes the transmembrane long form (L-OPA1) that plays a central role in mitochondrial inner membrane fusion and cristae morphology. L-OPA1 and the soluble short form (S-OPA1) form higher-order helical assemblies that coordinate the fusion of mitochondrial inner membranes. Inner membrane-anchored L-OPA1 molecules initiate membrane remodeling by recruiting soluble S-OPA1 to rapidly polymerize into a flexible cylindrical scaffold encaging the mitochondrial inner membrane. Once at the membrane surface, the formation of S-OPA1 helices induce bilayer curvature. OPA1 dimerization through the paddle region, which inserts into cardiolipin-containing membrane, promotes GTP hydrolysis and the helical assembly of a flexible OPA1 lattice on the membrane, which drives membrane curvature and mitochondrial fusion. Plays a role in the maintenance and remodeling of mitochondrial cristae, some invaginations of the mitochondrial inner membrane that provide an increase in the surface area. Probably acts by forming helical filaments at the inside of inner membrane tubes with the shape and dimensions of crista junctions. The equilibrium between L-OPA1 and S-OPA1 influences cristae shape and morphology: increased L-OPA1 levels promote cristae stacking and elongated mitochondria, while increased S-OPA1 levels correlated with irregular cristae packing and round mitochondria shape. Its function is as follows. Constitutes the soluble short form (S-OPA1) generated by cleavage by OMA1, which plays a central role in mitochondrial inner membrane fusion and cristae morphology. The transmembrane long form (L-OPA1) and the S-OPA1 form higher-order helical assemblies that coordinate the fusion of mitochondrial inner membranes. Inner membrane-anchored L-OPA1 molecules initiate membrane remodeling by recruiting soluble S-OPA1 to rapidly polymerize into a flexible cylindrical scaffold encaging the mitochondrial inner membrane. Once at the membrane surface, the formation of S-OPA1 helices induce bilayer curvature. OPA1 dimerization through the paddle region, which inserts into cardiolipin-containing membrane, promotes GTP hydrolysis and the helical assembly of a flexible OPA1 lattice on the membrane, which drives membrane curvature and mitochondrial fusion. Excess levels of S-OPA1 produced by cleavage by OMA1 following stress conditions that induce loss of mitochondrial membrane potential, lead to an impaired equilibrium between L-OPA1 and S-OPA1, thereby inhibiting mitochondrial fusion. Involved in mitochondrial safeguard in response to transient mitochondrial membrane depolarization by mediating flickering: cleavage by OMA1 leads to excess production of S-OPA1, preventing mitochondrial hyperfusion. Plays a role in the maintenance and remodeling of mitochondrial cristae, some invaginations of the mitochondrial inner membrane that provide an increase in the surface area. Probably acts by forming helical filaments at the inside of inner membrane tubes with the shape and dimensions of crista junctions. The equilibrium between L-OPA1 and S-OPA1 influences cristae shape and morphology: increased L-OPA1 levels promote cristae stacking and elongated mitochondria, while increased S-OPA1 levels correlated with irregular cristae packing and round mitochondria shape. Isoforms that contain the alternative exon 4b are required for mitochondrial genome maintenance, possibly by anchoring the mitochondrial nucleoids to the inner mitochondrial membrane. In Rattus norvegicus (Rat), this protein is Dynamin-like GTPase OPA1, mitochondrial.